Consider the following 177-residue polypeptide: Bifunctional protein PyrR (177 aa).

The PRPP-binding motif lies at valine 99–threonine 111.

Belongs to the purine/pyrimidine phosphoribosyltransferase family. PyrR subfamily.

The catalysed reaction is UMP + diphosphate = 5-phospho-alpha-D-ribose 1-diphosphate + uracil. In terms of biological role, regulates the transcription of the pyrimidine nucleotide (pyr) operon in response to exogenous pyrimidines. Its function is as follows. Also displays a weak uracil phosphoribosyltransferase activity which is not physiologically significant. The sequence is that of Bifunctional protein PyrR from Akkermansia muciniphila (strain ATCC BAA-835 / DSM 22959 / JCM 33894 / BCRC 81048 / CCUG 64013 / CIP 107961 / Muc).